A 725-amino-acid chain; its full sequence is MADVYELFLTCPKGLESLLLEEAQGLGLSEARAQVSAVRGQGSLEVAYRLCLWSRLANRVLLVLARFPVENAESMYLAVHAVNWEDHLDAGGTLAVEFSGKGSGIDNTHFGALKVKDAIVDNLRERSGRRPSVDKVNPDVRVHLHLDRGQATLSLDLSGHSLHQRGYRLQQGAAPLKENLAAAVLIRAGWPKIAAEGGALADPMCGVGTFLVEAALMAADIAPNLRRERWGFSNWLGHVPALWRKLHEEAQQRAAAGLARAPLWIRGYEADPRLIQPARNNIERAGVADWVKIYQGELATFEPRPDKGQAGLVICNPPYGERLGDEASLLYLYQNLGERLRQSCIGWSAGVFTGAPELGKRMGIRSHKQYAFWNGALACKLLMIQVEPRQFVTGERGERNDDGQARAPSEPARLSEGGQMFANRLQKNLRQLGKWARRDKVECYRLYDADMPEYALAVDIYGDWVHVQEYAAPKSVDPAKAQARLFDALAAIPQALGVAQERVVVKRRERQAGKKQYERQSSEGKFLEVGEGGVRLLVNLTDYLDTGLFLDHRPMRLRIQKEAAGKRFLNLFCYTATATVHAARGGARSTTSVDLSKTYLDWARRNLSLNGFSDRQRLVHSDVMEWLREDDGQYELIFIDPPTFSNSKRMEGVFDVQRDQVELLDLAMARLAPGGVLYFSNNFRKFELDESVQARYAVEEITGETLDPDFARNPKIHRAWRITVR.

The THUMP domain occupies 46-157 (VAYRLCLWSR…RGQATLSLDL (112 aa)). Positions 393–412 (TGERGERNDDGQARAPSEPA) are disordered. The span at 395-404 (ERGERNDDGQ) shows a compositional bias: basic and acidic residues.

The protein belongs to the methyltransferase superfamily. RlmKL family.

Its subcellular location is the cytoplasm. It carries out the reaction guanosine(2445) in 23S rRNA + S-adenosyl-L-methionine = N(2)-methylguanosine(2445) in 23S rRNA + S-adenosyl-L-homocysteine + H(+). The catalysed reaction is guanosine(2069) in 23S rRNA + S-adenosyl-L-methionine = N(2)-methylguanosine(2069) in 23S rRNA + S-adenosyl-L-homocysteine + H(+). In terms of biological role, specifically methylates the guanine in position 2445 (m2G2445) and the guanine in position 2069 (m7G2069) of 23S rRNA. This Pseudomonas paraeruginosa (strain DSM 24068 / PA7) (Pseudomonas aeruginosa (strain PA7)) protein is Ribosomal RNA large subunit methyltransferase K/L.